The following is a 254-amino-acid chain: Phosphonates import ATP-binding protein PhnC 2 (254 aa).

The region spanning 4-248 (LEVNNLGKHY…KIESIYGFQQ (245 aa)) is the ABC transporter domain. 37–44 (GPSGAGKS) contacts ATP.

It belongs to the ABC transporter superfamily. Phosphonates importer (TC 3.A.1.9.1) family. In terms of assembly, the complex is composed of two ATP-binding proteins (PhnC), two transmembrane proteins (PhnE) and a solute-binding protein (PhnD).

The protein localises to the cell membrane. The enzyme catalyses phosphonate(out) + ATP + H2O = phosphonate(in) + ADP + phosphate + H(+). Its function is as follows. Part of the ABC transporter complex PhnCDE involved in phosphonates import. Responsible for energy coupling to the transport system. The sequence is that of Phosphonates import ATP-binding protein PhnC 2 from Oceanobacillus iheyensis (strain DSM 14371 / CIP 107618 / JCM 11309 / KCTC 3954 / HTE831).